The primary structure comprises 464 residues: Hepatocyte nuclear factor 4-alpha (464 aa).

The segment at residues 57–132 is a DNA-binding region (nuclear receptor); that stretch reads NSLCAICGDR…AGMKKEAVQN (76 aa). NR C4-type zinc fingers lie at residues 60–80 and 96–120; these read CAIC…CDGC and CRFS…LKKC. An NR LBD domain is found at 147 to 376; that stretch reads SSLPSINVLI…NLLQEMLLGG (230 aa). The 9aaTAD signature appears at 367–375; sequence NLLQEMLLG. Over residues 410 to 421 the composition is skewed to polar residues; sequence SQLHNGQMSTPE. Residues 410–433 are disordered; that stretch reads SQLHNGQMSTPETPQPSPPAGSGA.

It belongs to the nuclear hormone receptor family. NR2 subfamily. As to quaternary structure, homodimerization is required for HNF4-alpha to bind to its recognition site. In terms of tissue distribution, expressed in liver and kidney.

It is found in the nucleus. Transcriptional regulator; binds and activates the promoter for the HNF1-alpha gene. Potential initiator of a transcriptional cascade within a subset of cells committed to a specific developmental program. Could be a determinant for asymmetry in early development. May play a role in the regulation of the circadian clock. The chain is Hepatocyte nuclear factor 4-alpha (hnf4a) from Xenopus laevis (African clawed frog).